We begin with the raw amino-acid sequence, 262 residues long: Pyridoxine 5'-phosphate synthase (262 aa).

N6 is a binding site for 3-amino-2-oxopropyl phosphate. 8-9 (DH) provides a ligand contact to 1-deoxy-D-xylulose 5-phosphate. 3-amino-2-oxopropyl phosphate is bound at residue R17. The active-site Proton acceptor is H43. 1-deoxy-D-xylulose 5-phosphate contacts are provided by R45 and H50. E70 serves as the catalytic Proton acceptor. A 1-deoxy-D-xylulose 5-phosphate-binding site is contributed by T102. The active-site Proton donor is H215. Residues G216 and 237–238 (GH) contribute to the 3-amino-2-oxopropyl phosphate site.

It belongs to the PNP synthase family. Homooctamer; tetramer of dimers.

The protein resides in the cytoplasm. The catalysed reaction is 3-amino-2-oxopropyl phosphate + 1-deoxy-D-xylulose 5-phosphate = pyridoxine 5'-phosphate + phosphate + 2 H2O + H(+). The protein operates within cofactor biosynthesis; pyridoxine 5'-phosphate biosynthesis; pyridoxine 5'-phosphate from D-erythrose 4-phosphate: step 5/5. Its function is as follows. Catalyzes the complicated ring closure reaction between the two acyclic compounds 1-deoxy-D-xylulose-5-phosphate (DXP) and 3-amino-2-oxopropyl phosphate (1-amino-acetone-3-phosphate or AAP) to form pyridoxine 5'-phosphate (PNP) and inorganic phosphate. This is Pyridoxine 5'-phosphate synthase from Helicobacter pylori (strain HPAG1).